Reading from the N-terminus, the 479-residue chain is Mitochondria-eating protein (479 aa).

Coiled-coil stretches lie at residues 109 to 161 (ERKL…LATT) and 187 to 223 (LRRL…RIAR). 2 disordered regions span residues 220 to 251 (RIAR…GRAR) and 456 to 479 (RSRS…SRSR). Residues 235–249 (RSPSPLPLRSCSPGR) are compositionally biased toward low complexity.

Belongs to the MIEAP family.

It is found in the cytoplasm. It localises to the cytosol. Its subcellular location is the mitochondrion outer membrane. The protein localises to the mitochondrion matrix. Key regulator of mitochondrial quality that mediates the repairing or degradation of unhealthy mitochondria in response to mitochondrial damage. Mediator of mitochondrial protein catabolic process (also named MALM) by mediating the degradation of damaged proteins inside mitochondria by promoting the accumulation in the mitochondrial matrix of hydrolases that are characteristic of the lysosomal lumen. Also involved in mitochondrion degradation of damaged mitochondria by promoting the formation of vacuole-like structures (named MIV), which engulf and degrade unhealthy mitochondria by accumulating lysosomes. Binds cardiolipin. May form molecular condensates (non-membrane-bounded organelles) within mitochondria that compartmentalize and promote cardiolipin metabolism. This Gallus gallus (Chicken) protein is Mitochondria-eating protein (SPATA18).